The primary structure comprises 396 residues: 1-deoxy-D-xylulose 5-phosphate reductoisomerase (396 aa).

6 residues coordinate NADPH: Thr15, Gly16, Ser17, Ile18, Gly41, and Asn129. Residue Lys130 participates in 1-deoxy-D-xylulose 5-phosphate binding. Glu131 is an NADPH binding site. A Mn(2+)-binding site is contributed by Asp155. 1-deoxy-D-xylulose 5-phosphate-binding residues include Ser156, Glu157, Ser182, and His205. Mn(2+) is bound at residue Glu157. Gly211 serves as a coordination point for NADPH. 1-deoxy-D-xylulose 5-phosphate-binding residues include Ser218, Asn223, Lys224, and Glu227. Glu227 contacts Mn(2+).

It belongs to the DXR family. Mg(2+) serves as cofactor. The cofactor is Mn(2+).

The catalysed reaction is 2-C-methyl-D-erythritol 4-phosphate + NADP(+) = 1-deoxy-D-xylulose 5-phosphate + NADPH + H(+). It participates in isoprenoid biosynthesis; isopentenyl diphosphate biosynthesis via DXP pathway; isopentenyl diphosphate from 1-deoxy-D-xylulose 5-phosphate: step 1/6. Its function is as follows. Catalyzes the NADPH-dependent rearrangement and reduction of 1-deoxy-D-xylulose-5-phosphate (DXP) to 2-C-methyl-D-erythritol 4-phosphate (MEP). The protein is 1-deoxy-D-xylulose 5-phosphate reductoisomerase of Xanthomonas axonopodis pv. citri (strain 306).